We begin with the raw amino-acid sequence, 270 residues long: GTP cyclohydrolase FolE2 2 (270 aa).

Belongs to the GTP cyclohydrolase IV family.

It catalyses the reaction GTP + H2O = 7,8-dihydroneopterin 3'-triphosphate + formate + H(+). It participates in cofactor biosynthesis; 7,8-dihydroneopterin triphosphate biosynthesis; 7,8-dihydroneopterin triphosphate from GTP: step 1/1. Its function is as follows. Converts GTP to 7,8-dihydroneopterin triphosphate. In Dechloromonas aromatica (strain RCB), this protein is GTP cyclohydrolase FolE2 2.